We begin with the raw amino-acid sequence, 1390 residues long: DNA-directed RNA polymerase subunit beta' (1390 aa).

The Zn(2+) site is built by Cys-70, Cys-72, Cys-85, and Cys-88. Mg(2+) contacts are provided by Asp-460, Asp-462, and Asp-464. The Zn(2+) site is built by Cys-814, Cys-888, Cys-895, and Cys-898.

The protein belongs to the RNA polymerase beta' chain family. The RNAP catalytic core consists of 2 alpha, 1 beta, 1 beta' and 1 omega subunit. When a sigma factor is associated with the core the holoenzyme is formed, which can initiate transcription. Mg(2+) serves as cofactor. Requires Zn(2+) as cofactor.

The catalysed reaction is RNA(n) + a ribonucleoside 5'-triphosphate = RNA(n+1) + diphosphate. DNA-dependent RNA polymerase catalyzes the transcription of DNA into RNA using the four ribonucleoside triphosphates as substrates. The sequence is that of DNA-directed RNA polymerase subunit beta' from Pseudoalteromonas translucida (strain TAC 125).